The primary structure comprises 203 residues: Large ribosomal subunit protein bL25 (203 aa).

Belongs to the bacterial ribosomal protein bL25 family. CTC subfamily. In terms of assembly, part of the 50S ribosomal subunit; part of the 5S rRNA/L5/L18/L25 subcomplex. Contacts the 5S rRNA. Binds to the 5S rRNA independently of L5 and L18.

This is one of the proteins that binds to the 5S RNA in the ribosome where it forms part of the central protuberance. The polypeptide is Large ribosomal subunit protein bL25 (Cellvibrio japonicus (strain Ueda107) (Pseudomonas fluorescens subsp. cellulosa)).